The primary structure comprises 377 residues: MIAVSGPSYEAFSYGGQARFNNQTVVDKVPPDMLHLIDANWYQYPPLNPMWHGILGFVIGMLGFVSAMGNGMVVYIFLSTKSLRTPSNLFVINLAISNFLMMFCMSPPMVINCYYETWVLGPLFCQIYAMLGSLFGCGSIWTMTMIAFDRYNVIVKGLSGKPLSINGALIRIIAIWLFSLGWTIAPMFGWNRYVPEGNMTACGTDYFNRGLLSASYLVCYGIWVYFVPLFLIIYSYWFIIQAVAAHEKNMREQAKKMNVASLRSSENQNTSAECKLAKVALMTISLWFMAWTPYLVINFSGIFNLVKISPLFTIWGSLFAKANAVYNPIVYGISHPKYRAALFAKFPSLACAAEPSSDAVSTTSGTTTVTDNEKSNA.

The Extracellular portion of the chain corresponds to 1–51; sequence MIAVSGPSYEAFSYGGQARFNNQTVVDKVPPDMLHLIDANWYQYPPLNPMW. A glycan (N-linked (GlcNAc...) asparagine) is linked at N22. A helical transmembrane segment spans residues 52 to 76; sequence HGILGFVIGMLGFVSAMGNGMVVYI. Over 77–88 the chain is Cytoplasmic; the sequence is FLSTKSLRTPSN. A helical membrane pass occupies residues 89-113; it reads LFVINLAISNFLMMFCMSPPMVINC. The Extracellular segment spans residues 114-128; sequence YYETWVLGPLFCQIY. A disulfide bridge connects residues C125 and C202. A helical membrane pass occupies residues 129–148; sequence AMLGSLFGCGSIWTMTMIAF. Over 149–167 the chain is Cytoplasmic; it reads DRYNVIVKGLSGKPLSING. A helical transmembrane segment spans residues 168 to 191; the sequence is ALIRIIAIWLFSLGWTIAPMFGWN. Residues 192–215 are Extracellular-facing; that stretch reads RYVPEGNMTACGTDYFNRGLLSAS. The N-linked (GlcNAc...) asparagine glycan is linked to N198. Residues 216-243 traverse the membrane as a helical segment; that stretch reads YLVCYGIWVYFVPLFLIIYSYWFIIQAV. The Cytoplasmic segment spans residues 244 to 278; it reads AAHEKNMREQAKKMNVASLRSSENQNTSAECKLAK. A helical transmembrane segment spans residues 279-302; the sequence is VALMTISLWFMAWTPYLVINFSGI. At 303-309 the chain is on the extracellular side; the sequence is FNLVKIS. A helical transmembrane segment spans residues 310-334; it reads PLFTIWGSLFAKANAVYNPIVYGIS. K321 carries the N6-(retinylidene)lysine modification. At 335-377 the chain is on the cytoplasmic side; sequence HPKYRAALFAKFPSLACAAEPSSDAVSTTSGTTTVTDNEKSNA. The segment covering 357 to 370 has biased composition (low complexity); sequence SDAVSTTSGTTTVT. The segment at 357–377 is disordered; it reads SDAVSTTSGTTTVTDNEKSNA.

This sequence belongs to the G-protein coupled receptor 1 family. Opsin subfamily. Phosphorylated on some or all of the serine and threonine residues present in the C-terminal region.

It localises to the membrane. In terms of biological role, visual pigments are the light-absorbing molecules that mediate vision. They consist of an apoprotein, opsin, covalently linked to 11-cis-retinal. The chain is Rhodopsin, long-wavelength from Apis mellifera (Honeybee).